Reading from the N-terminus, the 439-residue chain is Ectonucleotide pyrophosphatase/phosphodiesterase family member 7 (439 aa).

The N-terminal stretch at 1–21 (MGHSAVLLCVALAILPACVTG) is a signal peptide. The Extracellular segment spans residues 22–414 (APVQRQHKLL…ILRPMLRSGS (393 aa)). Residues D36 and T72 each coordinate Zn(2+). The segment at 69–75 (VTMTSPC) is required for enzyme activity. Residue T72 is the Nucleophile of the active site. Substrate is bound at residue N93. N-linked (GlcNAc...) asparagine glycosylation is found at N97, N118, N143, and N165. 4 residues coordinate Zn(2+): D196, H200, D243, and H244. N264 carries an N-linked (GlcNAc...) asparagine glycan. H350 is a Zn(2+) binding site. Residues 415–435 (ASLLSSQHHLVALLVGILTCL) traverse the membrane as a helical segment. Topologically, residues 436–439 (AKVL) are cytoplasmic.

The cofactor is Zn(2+). In terms of processing, N-glycosylated; required for activity and transport to the plasma membrane. As to expression, expressed in liver and small intestine.

The protein localises to the cell membrane. The catalysed reaction is a sphingomyelin + H2O = phosphocholine + an N-acylsphing-4-enine + H(+). It catalyses the reaction a 1-O-alkyl-2-acetyl-sn-glycero-3-phosphocholine + H2O = a 1-O-alkyl-2-acetyl-sn-glycerol + phosphocholine + H(+). The enzyme catalyses 1-O-octadecyl-2-acetyl-sn-glycero-3-phosphocholine + H2O = 1-O-octadecyl-2-acetyl-sn-glycerol + phosphocholine + H(+). It carries out the reaction 1-hexadecanoyl-sn-glycero-3-phosphocholine + H2O = 1-hexadecanoyl-sn-glycerol + phosphocholine + H(+). Functionally, choline-specific phosphodiesterase that hydrolyzes sphingomyelin releasing the ceramide and phosphocholine and therefore is involved in sphingomyelin digestion, ceramide formation, and fatty acid (FA) absorption in the gastrointestinal tract. Also has phospholipase C activity and can also cleave phosphocholine from palmitoyl lyso-phosphatidylcholine and platelet-activating factor (PAF) leading to its inactivation. Does not have nucleotide pyrophosphatase activity. May promote cholesterol absorption by affecting the levels of sphingomyelin derived from either diet or endogenous sources, in the intestinal lumen. This chain is Ectonucleotide pyrophosphatase/phosphodiesterase family member 7, found in Mus musculus (Mouse).